Reading from the N-terminus, the 362-residue chain is Cobalt-precorrin-5B C(1)-methyltransferase (362 aa).

It belongs to the CbiD family.

It catalyses the reaction Co-precorrin-5B + S-adenosyl-L-methionine = Co-precorrin-6A + S-adenosyl-L-homocysteine. It participates in cofactor biosynthesis; adenosylcobalamin biosynthesis; cob(II)yrinate a,c-diamide from sirohydrochlorin (anaerobic route): step 6/10. Catalyzes the methylation of C-1 in cobalt-precorrin-5B to form cobalt-precorrin-6A. The polypeptide is Cobalt-precorrin-5B C(1)-methyltransferase (Burkholderia orbicola (strain MC0-3)).